We begin with the raw amino-acid sequence, 106 residues long: PAT complex subunit Asterix (106 aa).

The disordered stretch occupies residues 1–29 (MSTNNMSDPRRPNKVLRYKPPPSECNPAL). Position 2 is an N-acetylserine (S2). Topologically, residues 2–32 (STNNMSDPRRPNKVLRYKPPPSECNPALDDP) are cytoplasmic. The chain crosses the membrane as a helical span at residues 33–51 (TPDYMNLLGMIFSMCGLML). Position 52 (K52) is a topological domain, lumenal. Residues 53–70 (LKWCAWVAVYCSFISFAN) traverse the membrane as a helical segment. The Cytoplasmic portion of the chain corresponds to 71 to 74 (SRSS). Residues 75–95 (EDTKQMMSSFMLSISAVVMSY) traverse the membrane as a helical segment. The Lumenal portion of the chain corresponds to 96-106 (LQNPQPMTPPW).

The protein belongs to the Asterix family. Component of the PAT complex, composed of WDR83OS/Asterix and CCDC47. The PAT complex is part of the multi-pass translocon (MPT) complex, composed of three subcomplexes, the GEL complex (composed of RAB5IF/OPTI and TMCO1), the BOS complex (composed of NCLN/Nicalin, NOMO1 and TMEM147) and the PAT complex (composed of WDR83OS/Asterix and CCDC47). The MPT complex associates with the SEC61 complex.

It is found in the endoplasmic reticulum membrane. Its function is as follows. Component of the multi-pass translocon (MPT) complex that mediates insertion of multi-pass membrane proteins into the lipid bilayer of membranes. The MPT complex takes over after the SEC61 complex: following membrane insertion of the first few transmembrane segments of proteins by the SEC61 complex, the MPT complex occludes the lateral gate of the SEC61 complex to promote insertion of subsequent transmembrane regions. Within the MPT complex, the PAT subcomplex sequesters any highly polar regions in the transmembrane domains away from the non-polar membrane environment until they can be buried in the interior of the fully assembled protein. Within the PAT subcomplex, WDR83OS/Asterix binds to and redirects the substrate to a location behind the SEC61 complex. The protein is PAT complex subunit Asterix (WDR83OS) of Canis lupus familiaris (Dog).